The chain runs to 60 residues: U-scutigerotoxin(02)-Tl4a (60 aa).

This sequence belongs to the scutigerotoxin-02 family. Post-translationally, contains 3 disulfide bonds. As to expression, expressed by the venom gland.

The protein localises to the secreted. This is U-scutigerotoxin(02)-Tl4a from Thereuopoda longicornis (Long-legged centipede).